Reading from the N-terminus, the 327-residue chain is Interleukin-12 subunit beta (327 aa).

The first 22 residues, 1–22 (MHPQQLVVSWFSLVLLASPIVA), serve as a signal peptide directing secretion. Residues 23–106 (IWELEKNVYI…LSRSLLLLHK (84 aa)) form the Ig-like C2-type domain. Cysteine 50 and cysteine 90 are oxidised to a cystine. N-linked (GlcNAc...) asparagine glycosylation is present at asparagine 223. In terms of domain architecture, Fibronectin type-III spans 238–327 (PPKNLQLKPL…WSEWASVSCS (90 aa)).

The protein belongs to the IL-12B family. As to quaternary structure, heterodimer with IL12A; disulfide-linked. The heterodimer is known as interleukin IL-12. Heterodimer with IL23A; disulfide-linked. The heterodimer is known as interleukin IL-23. Also secreted as a monomer. Interacts with NBR1; this interaction promotes IL-12 secretion.

Cytokine that can act as a growth factor for activated T and NK cells, enhance the lytic activity of NK/lymphokine-activated killer cells, and stimulate the production of IFN-gamma by resting PBMC. Functionally, associates with IL23A to form the IL-23 interleukin, a heterodimeric cytokine which functions in innate and adaptive immunity. IL-23 may constitute with IL-17 an acute response to infection in peripheral tissues. IL-23 binds to a heterodimeric receptor complex composed of IL12RB1 and IL23R, activates the Jak-Stat signaling cascade, stimulates memory rather than naive T-cells and promotes production of pro-inflammatory cytokines. IL-23 induces autoimmune inflammation and thus may be responsible for autoimmune inflammatory diseases and may be important for tumorigenesis. This Bubalus bubalis (Domestic water buffalo) protein is Interleukin-12 subunit beta (IL12B).